A 382-amino-acid polypeptide reads, in one-letter code: Lactaldehyde reductase (382 aa).

Residues Asp-38, Asn-70, 97-98, 139-143, Asn-150, Lys-161, and 180-184 each bind NAD(+); these read GS, TTAGT, and MMDGM. Positions 195, 199, 262, and 276 each coordinate Fe cation.

This sequence belongs to the iron-containing alcohol dehydrogenase family. In terms of assembly, homodimer. The cofactor is Fe cation.

It catalyses the reaction (R)-propane-1,2-diol + NAD(+) = (R)-lactaldehyde + NADH + H(+). It carries out the reaction (S)-propane-1,2-diol + NAD(+) = (S)-lactaldehyde + NADH + H(+). Its pathway is carbohydrate degradation; L-fucose degradation. The chain is Lactaldehyde reductase (fucO) from Escherichia coli O157:H7.